A 270-amino-acid polypeptide reads, in one-letter code: Acetyl-coenzyme A carboxylase carboxyl transferase subunit beta (270 aa).

Residues 16-270 (LFAKCPACKH…KLLAFHGGSK (255 aa)) form the CoA carboxyltransferase N-terminal domain. 4 residues coordinate Zn(2+): cysteine 20, cysteine 23, cysteine 38, and cysteine 41. The segment at 20 to 41 (CPACKHMIYQKDLGLEKICPKC) adopts a C4-type zinc-finger fold.

The protein belongs to the AccD/PCCB family. In terms of assembly, acetyl-CoA carboxylase is a heterohexamer composed of biotin carboxyl carrier protein (AccB), biotin carboxylase (AccC) and two subunits each of ACCase subunit alpha (AccA) and ACCase subunit beta (AccD). The cofactor is Zn(2+).

It localises to the cytoplasm. It catalyses the reaction N(6)-carboxybiotinyl-L-lysyl-[protein] + acetyl-CoA = N(6)-biotinyl-L-lysyl-[protein] + malonyl-CoA. It functions in the pathway lipid metabolism; malonyl-CoA biosynthesis; malonyl-CoA from acetyl-CoA: step 1/1. Functionally, component of the acetyl coenzyme A carboxylase (ACC) complex. Biotin carboxylase (BC) catalyzes the carboxylation of biotin on its carrier protein (BCCP) and then the CO(2) group is transferred by the transcarboxylase to acetyl-CoA to form malonyl-CoA. This is Acetyl-coenzyme A carboxylase carboxyl transferase subunit beta from Streptococcus mutans serotype c (strain NN2025).